The following is a 347-amino-acid chain: Protein-glutamate methylesterase/protein-glutamine glutaminase 1 (347 aa).

A Response regulatory domain is found at 6–123 (RVLVVDDSAT…LRPFGDLAEK (118 aa)). Asp-57 is modified (4-aspartylphosphate). The CheB-type methylesterase domain maps to 150 to 342 (FRVGRKIVAI…EEILKMTAAR (193 aa)). Active-site residues include Ser-162, His-188, and Asp-284.

Belongs to the CheB family. Post-translationally, phosphorylated by CheA. Phosphorylation of the N-terminal regulatory domain activates the methylesterase activity.

The protein localises to the cytoplasm. It catalyses the reaction [protein]-L-glutamate 5-O-methyl ester + H2O = L-glutamyl-[protein] + methanol + H(+). The catalysed reaction is L-glutaminyl-[protein] + H2O = L-glutamyl-[protein] + NH4(+). In terms of biological role, involved in chemotaxis. Part of a chemotaxis signal transduction system that modulates chemotaxis in response to various stimuli. Catalyzes the demethylation of specific methylglutamate residues introduced into the chemoreceptors (methyl-accepting chemotaxis proteins or MCP) by CheR. Also mediates the irreversible deamidation of specific glutamine residues to glutamic acid. The sequence is that of Protein-glutamate methylesterase/protein-glutamine glutaminase 1 from Rhizobium johnstonii (strain DSM 114642 / LMG 32736 / 3841) (Rhizobium leguminosarum bv. viciae).